Here is a 119-residue protein sequence, read N- to C-terminus: U-scoloptoxin(01)-Er1a (119 aa).

A signal peptide spans Met1 to Met22. The 59-residue stretch at Asn39–Asp97 folds into the Chitin-binding type-2 domain. Cys74 and Cys87 are disulfide-bonded.

It belongs to the scoloptoxin-01 family. Contains 3 disulfide bonds. As to expression, expressed by the venom gland.

The protein localises to the secreted. This Ethmostigmus rubripes (Giant centipede) protein is U-scoloptoxin(01)-Er1a.